A 377-amino-acid polypeptide reads, in one-letter code: DNA replication and repair protein RecF (377 aa).

An ATP-binding site is contributed by 30–37; that stretch reads GPNGQGKT.

Belongs to the RecF family.

It localises to the cytoplasm. Functionally, the RecF protein is involved in DNA metabolism; it is required for DNA replication and normal SOS inducibility. RecF binds preferentially to single-stranded, linear DNA. It also seems to bind ATP. The sequence is that of DNA replication and repair protein RecF from Thermobifida fusca (strain YX).